We begin with the raw amino-acid sequence, 491 residues long: Cobyric acid synthase (491 aa).

The 188-residue stretch at 250–437 (QLRVVVPVLP…VHGVFDHPQA (188 aa)) folds into the GATase cobBQ-type domain. The active-site Nucleophile is cysteine 331. Histidine 429 is a catalytic residue.

This sequence belongs to the CobB/CobQ family. CobQ subfamily.

It participates in cofactor biosynthesis; adenosylcobalamin biosynthesis. Catalyzes amidations at positions B, D, E, and G on adenosylcobyrinic A,C-diamide. NH(2) groups are provided by glutamine, and one molecule of ATP is hydrogenolyzed for each amidation. This chain is Cobyric acid synthase, found in Xanthomonas axonopodis pv. citri (strain 306).